The following is a 123-amino-acid chain: Large ribosomal subunit protein uL14 (123 aa).

It belongs to the universal ribosomal protein uL14 family. As to quaternary structure, part of the 50S ribosomal subunit. Forms a cluster with proteins L3 and L19. In the 70S ribosome, L14 and L19 interact and together make contacts with the 16S rRNA in bridges B5 and B8.

Functionally, binds to 23S rRNA. Forms part of two intersubunit bridges in the 70S ribosome. The polypeptide is Large ribosomal subunit protein uL14 (Corynebacterium urealyticum (strain ATCC 43042 / DSM 7109)).